A 258-amino-acid polypeptide reads, in one-letter code: Acetylglutamate kinase (258 aa).

Residues 44-45 (GG), arginine 66, and asparagine 158 each bind substrate. Residues 181-186 (DVSGIL) and 209-211 (IIT) each bind ATP.

It belongs to the acetylglutamate kinase family. ArgB subfamily. As to quaternary structure, homodimer.

Its subcellular location is the cytoplasm. It carries out the reaction N-acetyl-L-glutamate + ATP = N-acetyl-L-glutamyl 5-phosphate + ADP. Its pathway is amino-acid biosynthesis; L-arginine biosynthesis; N(2)-acetyl-L-ornithine from L-glutamate: step 2/4. In terms of biological role, catalyzes the ATP-dependent phosphorylation of N-acetyl-L-glutamate. This is Acetylglutamate kinase from Klebsiella pneumoniae subsp. pneumoniae (strain ATCC 700721 / MGH 78578).